Consider the following 152-residue polypeptide: Diamine acetyltransferase (152 aa).

The region spanning 5-152 is the N-acetyltransferase domain; it reads FEVRKATIDD…SFLDLTPKSD (148 aa). The active-site Proton donor is the Tyr-127.

It belongs to the acetyltransferase family. As to quaternary structure, homotetramer.

It localises to the cytoplasm. The enzyme catalyses an alkane-alpha,omega-diamine + acetyl-CoA = an N-acetylalkane-alpha,omega-diamine + CoA + H(+). It functions in the pathway amine and polyamine degradation; putrescine degradation; N-acetylputrescine from putrescine: step 1/1. Functionally, enzyme which catalyzes the acetylation of polyamines. Displays higher substrate specificity for spermine than for spermidine. May function to acetylate host-derived polyamines, thus alleviating the necessity for de novo synthesis of these molecules. This chain is Diamine acetyltransferase, found in Cryptosporidium parvum (strain Iowa II).